The sequence spans 335 residues: MILSKPILLSAVQPSGNLTIGNYIGTMRHWSKMQNNYECLYCIADLHALTIQKNKIHLNKSILDTISFYLSCGVDPQKSIIFIQSHVYQHSQLNWILNCFSQFSELLRMTQFKIKSNCSKKINAALFNYPILMAADILLYQTNFVPVGQDQKQHVELTRNIAHRFNSLYGHVFTLPKPLITQHGSKIMSLLEPSKKMSKSDINKKNVIFLLDDIKTVISKIQNAYTDSETPSKIYYDIEKKPGISNLLEILSAITNKDIDILLKELEGMLYSEFKNIVADHLSKFLYKLQKSYNDYRNDEVYLKKIAYEGAMKSQLKSNKTLTKVYDKLGLIPLF.

ATP is bound by residues 13–15 and 21–22; these read QPS and GN. The 'HIGH' region motif lies at 14–22; sequence PSGNLTIGN. L-tryptophan is bound at residue aspartate 136. ATP is bound by residues 148–150, isoleucine 187, and 196–200; these read GQD and KMSKS. A 'KMSKS' region motif is present at residues 196–200; the sequence is KMSKS.

The protein belongs to the class-I aminoacyl-tRNA synthetase family. Homodimer.

The protein resides in the cytoplasm. The catalysed reaction is tRNA(Trp) + L-tryptophan + ATP = L-tryptophyl-tRNA(Trp) + AMP + diphosphate + H(+). Catalyzes the attachment of tryptophan to tRNA(Trp). The sequence is that of Tryptophan--tRNA ligase from Buchnera aphidicola subsp. Acyrthosiphon pisum (strain APS) (Acyrthosiphon pisum symbiotic bacterium).